The primary structure comprises 112 residues: Putative pterin-4-alpha-carbinolamine dehydratase (112 aa).

This sequence belongs to the pterin-4-alpha-carbinolamine dehydratase family.

The catalysed reaction is (4aS,6R)-4a-hydroxy-L-erythro-5,6,7,8-tetrahydrobiopterin = (6R)-L-erythro-6,7-dihydrobiopterin + H2O. The polypeptide is Putative pterin-4-alpha-carbinolamine dehydratase (Hahella chejuensis (strain KCTC 2396)).